A 558-amino-acid polypeptide reads, in one-letter code: MSSEPSTTGTSPRTPRPGAQKSSGAVTKKGDRAAKDKTASTLPPVGEDEPKNPEEYQCTGVLETDFAELCTRSGYVDFPKVVTRPRVQQSSVPSASTSEKPVLDDQRPSASCSQSSLESKYVFFRPTIQVELEQEDSKAVKEIYIRGWKVEDRILGIFSKCLPSLSQLQAINLWKVGLTDKTLTTFIALLPLCSSTLRKVSLEGNPIPEQSFSKLMGLDSTIVHLSLRNNNINDHGAQLLGQALSTLQNSNRTLVSLNLAFNHIGDVGAGYIADGLRLNRSLLWLSLAHNHIQDKGALKLAEVLRPFELTHREVVERRRLLLVKGTQERSRSPSSSRYGDSKAEREKSQTLGISNVTLVDKQEKMQSLKAPKTISKKKEKTGEVVKKEEKLGSGQSPTQGTPKKEDAAKAGKGKVTIPEQKMSKGKATKMGAKEKRSILLESEQLVVEATEMVNPLLEPVEHRDGKVFLPGNKVLLHLNLLRNQITEVGLEGFLTAVQYQVQVSKPKTSPKAPLGLLWLSLAKNCFDPQCPTHVMIQELMLPRDPVKAKAREEEAAAT.

Over residues 1 to 18 (MSSEPSTTGTSPRTPRPG) the composition is skewed to low complexity. Disordered stretches follow at residues 1-55 (MSSE…NPEE) and 86-112 (RVQQ…SASC). Over residues 28–38 (KKGDRAAKDKT) the composition is skewed to basic and acidic residues. Polar residues predominate over residues 86–99 (RVQQSSVPSASTSE). LRR repeat units follow at residues 196 to 216 (TLRK…SKLM), 221 to 241 (TIVH…QLLG), 253 to 274 (TLVS…YIAD), and 281 to 302 (SLLW…KLAE). Positions 325 to 415 (GTQERSRSPS…DAAKAGKGKV (91 aa)) are disordered. Composition is skewed to basic and acidic residues over residues 339-348 (GDSKAEREKS) and 380-391 (KTGEVVKKEEKL).

This chain is Leucine-rich repeat-containing protein 71 (Lrrc71), found in Mus musculus (Mouse).